The sequence spans 345 residues: uncharacterized protein (345 aa).

This sequence belongs to the transketolase family. Thiamine diphosphate serves as cofactor.

This is an uncharacterized protein from Sinorhizobium fredii (strain NBRC 101917 / NGR234).